We begin with the raw amino-acid sequence, 432 residues long: Mannose-6-phosphate isomerase 1 (432 aa).

Met1 is modified (N-acetylmethionine). Residues Gln124, His126, Glu151, and His288 each coordinate Zn(2+). Arg307 is a catalytic residue.

Belongs to the mannose-6-phosphate isomerase type 1 family. It depends on Zn(2+) as a cofactor. In terms of tissue distribution, constitutively expressed in both vegetative and reproductive organs under normal growth conditions (at protein level).

The enzyme catalyses D-mannose 6-phosphate = D-fructose 6-phosphate. Its pathway is nucleotide-sugar biosynthesis; GDP-alpha-D-mannose biosynthesis; alpha-D-mannose 1-phosphate from D-fructose 6-phosphate: step 1/2. With respect to regulation, inhibited by EDTA, Zn(2+), Cd(2+), Co(2+), p-chloromercuribenzoate and L-ascorbic acid (AsA). Phosphomannose isomerase involved in the synthesis of the GDP-mannose and dolichol-phosphate-mannose required for a number of critical mannosyl transfer reactions. Involved in the ascorbic acid (AsA) biosynthesis. Required during the endosperm development. This is Mannose-6-phosphate isomerase 1 (PMI1) from Arabidopsis thaliana (Mouse-ear cress).